The chain runs to 174 residues: uncharacterized protein (174 aa).

This is an uncharacterized protein from Caenorhabditis elegans.